The chain runs to 1069 residues: Cellulose synthase A catalytic subunit 5 [UDP-forming] (1069 aa).

The residue at position 1 (M1) is an N-acetylmethionine. Over 1–265 the chain is Cytoplasmic; that stretch reads MNTGGRLIAG…KSSKINPYRM (265 aa). Residues C39, C42, C58, C61, C66, C69, C81, and C84 each contribute to the Zn(2+) site. Residues 39-85 form an RING-type; degenerate zinc finger; that stretch reads CQICGDEIELSVDGESFVACNECAFPVCRPCYEYERREGNQSCPQCK. 2 positions are modified to phosphoserine: S229 and S230. The chain crosses the membrane as a helical span at residues 266–286; the sequence is LIVLRLVILGLFFHYRILHPV. Over 287 to 288 the chain is Extracellular; that stretch reads ND. Residues 289-309 traverse the membrane as a helical segment; the sequence is AYALWLISVICEIWFAVSWVL. At 310–853 the chain is on the cytoplasmic side; the sequence is DQFPKWYPIE…INSVVYPWTS (544 aa). Residues S348, K354, E355, and D384 each contribute to the UDP-alpha-D-glucose site. Residue D384 is part of the active site. Positions 438 to 464 form a coiled coil; that stretch reads VRERRAMKRDYEEFKVKINALVATAQK. K525 lines the UDP-alpha-D-glucose pocket. Positions 526 and 550 each coordinate Mn(2+). D770 is an active-site residue. Residues 854–874 form a helical membrane-spanning segment; it reads IPLLVYCSLPAICLLTGKFIV. Residues 875–879 are Extracellular-facing; the sequence is PEISN. A helical membrane pass occupies residues 880-900; the sequence is YASILFMALFGSIAVTGILEM. Over 901–915 the chain is Cytoplasmic; the sequence is QWGKVGIDDWWRNEQ. Residues 916-936 form a helical membrane-spanning segment; it reads FWVIGGVSAHLFALFQGLLKV. At 937 to 965 the chain is on the extracellular side; sequence LAGVETNFTVTSKAADDGEFSELYIFKWT. A glycan (N-linked (GlcNAc...) asparagine) is linked at N943. The chain crosses the membrane as a helical span at residues 966–986; sequence SLLIPPTTLLIINVIGVIVGI. Residues 987–997 lie on the Cytoplasmic side of the membrane; sequence SDAISNGYDSW. A helical transmembrane segment spans residues 998-1018; it reads GPLFGRLFFAFWVILHLYPFL. The Extracellular segment spans residues 1019 to 1027; the sequence is KGLLGKQDR. A helical transmembrane segment spans residues 1028-1048; that stretch reads MPTIILVWSILLASILTLLWV. Residues 1049-1069 are Cytoplasmic-facing; sequence RVNPFVAKGGPILEICGLDCL.

This sequence belongs to the glycosyltransferase 2 family. Plant cellulose synthase subfamily. It depends on Zn(2+) as a cofactor. The cofactor is Mn(2+). In terms of tissue distribution, expressed in young plants, stems and flowers.

The protein resides in the cell membrane. The catalysed reaction is [(1-&gt;4)-beta-D-glucosyl](n) + UDP-alpha-D-glucose = [(1-&gt;4)-beta-D-glucosyl](n+1) + UDP + H(+). It participates in glycan metabolism; plant cellulose biosynthesis. In terms of biological role, catalytic subunit of cellulose synthase terminal complexes ('rosettes'), required for beta-1,4-glucan microfibril crystallization, a major mechanism of the cell wall formation. This chain is Cellulose synthase A catalytic subunit 5 [UDP-forming], found in Arabidopsis thaliana (Mouse-ear cress).